The chain runs to 304 residues: Cell surface-binding protein OPG105 (304 aa).

Residues 1–235 enclose the Alpha-carbonic anhydrase domain; the sequence is MPQQLSPINI…NDDTQVYYSG (235 aa). The Virion surface segment spans residues 1 to 275; the sequence is MPQQLSPINI…YQKYIEGNKT (275 aa). Residues 276–294 form a helical membrane-spanning segment; sequence FAIIAIVFVFILTAILFLM. Over 295–304 the chain is Intravirion; it reads SRRYSREKQN.

It belongs to the alpha-carbonic anhydrase family. In terms of assembly, homodimer; disulfide-linked. Post-translationally, apparently non-glycosylated.

The protein resides in the virion membrane. Its function is as follows. Binds to chondroitin sulfate on the cell surface to provide virion attachment to target cell. The polypeptide is Cell surface-binding protein OPG105 (OPG105) (Vaccinia virus (strain Copenhagen) (VACV)).